The chain runs to 654 residues: Meiotically up-regulated gene 24 protein (654 aa).

One can recognise an RRM 1 domain in the interval 299–355 (RNVFIGNLPSSYHEKEIEEAFGKFGKIEHIKILSKKNIAFVHFLNIRDAIKVVRTLS). The tract at residues 383-404 (SCFTSKQNPDTTSDRCRQQESK) is disordered. Residues 384–393 (CFTSKQNPDT) are compositionally biased toward polar residues. The segment covering 394–404 (TSDRCRQQESK) has biased composition (basic and acidic residues). 2 RRM domains span residues 409 to 482 (RTVF…WGKE) and 500 to 571 (RNVY…YAPD).

The protein localises to the cytoplasm. Has a role in meiosis. The chain is Meiotically up-regulated gene 24 protein (mug24) from Schizosaccharomyces pombe (strain 972 / ATCC 24843) (Fission yeast).